Here is a 107-residue protein sequence, read N- to C-terminus: NADH-quinone oxidoreductase subunit K (107 aa).

Helical transmembrane passes span 11 to 31 (LTHYLVLAALLFVMGMAGVLL), 36 to 56 (IVLLMSIELMLNSVNLTFVAF), and 67 to 87 (IMVFFVMTIAAAEAAVGLALA).

This sequence belongs to the complex I subunit 4L family. NDH-1 is composed of 14 different subunits. Subunits NuoA, H, J, K, L, M, N constitute the membrane sector of the complex.

It localises to the cell inner membrane. The catalysed reaction is a quinone + NADH + 5 H(+)(in) = a quinol + NAD(+) + 4 H(+)(out). Functionally, NDH-1 shuttles electrons from NADH, via FMN and iron-sulfur (Fe-S) centers, to quinones in the respiratory chain. The immediate electron acceptor for the enzyme in this species is believed to be ubiquinone. Couples the redox reaction to proton translocation (for every two electrons transferred, four hydrogen ions are translocated across the cytoplasmic membrane), and thus conserves the redox energy in a proton gradient. This is NADH-quinone oxidoreductase subunit K from Bdellovibrio bacteriovorus (strain ATCC 15356 / DSM 50701 / NCIMB 9529 / HD100).